The following is an 80-amino-acid chain: U19-lycotoxin-Ls1a (80 aa).

An N-terminal signal peptide occupies residues 1–22 (MSPKVQALIFIVGLITLLAAHA). A propeptide spanning residues 23–34 (QEELSDNIESER) is cleaved from the precursor. 4 disulfide bridges follow: Cys36–Cys50, Cys43–Cys55, Cys49–Cys66, and Cys57–Cys64.

It belongs to the neurotoxin 02 (plectoxin) family. 05 (U19-lycotoxin) subfamily. Expressed by the venom gland.

It is found in the secreted. The protein is U19-lycotoxin-Ls1a of Lycosa singoriensis (Wolf spider).